The following is a 318-amino-acid chain: Olfactory receptor 5G25 (318 aa).

At methionine 1–isoleucine 25 the chain is on the extracellular side. Asparagine 5 carries N-linked (GlcNAc...) asparagine glycosylation. Residues valine 26–isoleucine 46 form a helical membrane-spanning segment. The Cytoplasmic segment spans residues isoleucine 47–arginine 54. Residues leucine 55–serine 75 form a helical membrane-spanning segment. At valine 76–isoleucine 99 the chain is on the extracellular side. Cysteine 97 and cysteine 189 form a disulfide bridge. The chain crosses the membrane as a helical span at residues glutamine 100–tyrosine 120. Topologically, residues aspartate 121–threonine 133 are cytoplasmic. The chain crosses the membrane as a helical span at residues leucine 134–isoleucine 154. Residues serine 155 to lysine 196 lie on the Extracellular side of the membrane. The helical transmembrane segment at histidine 197–serine 217 threads the bilayer. The Cytoplasmic portion of the chain corresponds to tyrosine 218 to alanine 237. The helical transmembrane segment at phenylalanine 238–isoleucine 258 threads the bilayer. Over tyrosine 259–asparagine 271 the chain is Extracellular. A helical membrane pass occupies residues lysine 272 to leucine 292. Residues arginine 293–leucine 318 lie on the Cytoplasmic side of the membrane.

This sequence belongs to the G-protein coupled receptor 1 family.

The protein resides in the cell membrane. In terms of biological role, potential odorant receptor. The polypeptide is Olfactory receptor 5G25 (Mus musculus (Mouse)).